A 149-amino-acid chain; its full sequence is Calmodulin (149 aa).

N-acetylalanine is present on Ala-2. 4 EF-hand domains span residues Glu-8–Asn-43, Pro-44–Asp-79, Asp-81–Lys-116, and Leu-117–Lys-149. Ca(2+) contacts are provided by Asp-21, Asp-23, Asp-25, Thr-27, Glu-32, Asp-57, Asp-59, Asn-61, Thr-63, Glu-68, Asp-94, Asp-96, Asn-98, Glu-105, Asp-130, Asp-132, Asp-134, Gln-136, and Glu-141.

It belongs to the calmodulin family.

Calmodulin mediates the control of a large number of enzymes, ion channels and other proteins by Ca(2+). Among the enzymes to be stimulated by the calmodulin-Ca(2+) complex are a number of protein kinases and phosphatases. The sequence is that of Calmodulin (CMD1) from Achlya klebsiana.